Reading from the N-terminus, the 1138-residue chain is Nuclear pore complex-interacting protein family member B13 (1138 aa).

A helical transmembrane segment spans residues 73 to 93; it reads VVITLWIVYLWVSLLKTIFWS. Disordered stretches follow at residues 242–578 and 747–1138; these read RMGH…NIKT and ERLR…RRLS. A compositionally biased stretch (polar residues) spans 252–263; that stretch reads QQHSITDNSLSL. Over residues 349–359 the composition is skewed to pro residues; the sequence is PLPPSAPPSAP. Composition is skewed to basic and acidic residues over residues 406–416, 448–458, 490–500, 532–542, 782–792, 824–834, 866–876, 908–918, 950–960, and 992–1002; these read DNIKTPAERLR.

This sequence belongs to the NPIP family.

The protein localises to the membrane. This Homo sapiens (Human) protein is Nuclear pore complex-interacting protein family member B13.